We begin with the raw amino-acid sequence, 221 residues long: Large ribosomal subunit protein uL3 (221 aa).

This sequence belongs to the universal ribosomal protein uL3 family. As to quaternary structure, part of the 50S ribosomal subunit. Forms a cluster with proteins L14 and L19.

Functionally, one of the primary rRNA binding proteins, it binds directly near the 3'-end of the 23S rRNA, where it nucleates assembly of the 50S subunit. The polypeptide is Large ribosomal subunit protein uL3 (Nocardia farcinica (strain IFM 10152)).